We begin with the raw amino-acid sequence, 354 residues long: Heme A synthase (354 aa).

8 consecutive transmembrane segments (helical) span residues 21–41, 106–126, 139–159, 171–191, 212–232, 268–288, 304–324, and 326–346; these read VAVWLLACCFMVAVMVLLGGL, VWGRLIGVVFGLPFLWLALSG, VFLLGAAQGGMGWFMVKSGLV, AHLALAFLIHGWMFWLALDIL, MLGLTGLVIVTLLFGGLVAGL, VQFGHRTLAEITIVVALVGWF, AVGLMALLQVGLGIGTLVMVV, and VWLASAHQMGAMALLTLCLWA. Residue H272 coordinates heme. H332 contacts heme.

This sequence belongs to the COX15/CtaA family. Type 2 subfamily. As to quaternary structure, interacts with CtaB. Heme b serves as cofactor.

The protein resides in the cell membrane. The catalysed reaction is Fe(II)-heme o + 2 A + H2O = Fe(II)-heme a + 2 AH2. It functions in the pathway porphyrin-containing compound metabolism; heme A biosynthesis; heme A from heme O: step 1/1. Functionally, catalyzes the conversion of heme O to heme A by two successive hydroxylations of the methyl group at C8. The first hydroxylation forms heme I, the second hydroxylation results in an unstable dihydroxymethyl group, which spontaneously dehydrates, resulting in the formyl group of heme A. This is Heme A synthase from Paramagnetospirillum magneticum (strain ATCC 700264 / AMB-1) (Magnetospirillum magneticum).